Reading from the N-terminus, the 278-residue chain is MALKSFNPTTPSQRQLVIVDRASLYKGKPVKALTQGLSSKGGRNNQGRITVRFQGGGHKRTYRLVDFKRRKFDVEGTVERLEYDPNRTAFIALVTYTDGEQAYILAPQRLAAGDKVIASDKAVDVKPGNTMPLQYIPVGSIIHNVEMKPGKGGQIARSAGTYVQLVGRDAGMAILRLNSGEQRLVHGSCLASIGAVSNSDHGNINDGKAGRSRWRGKRPHVRGVVMNPVDHPHGGGEGRTSGGRHPVTPWGKPTKGKRTRSNKSTDKFIMRSRHQRKK.

A disordered region spans residues 201 to 278 (HGNINDGKAG…IMRSRHQRKK (78 aa)). A compositionally biased stretch (basic residues) spans 210-221 (GRSRWRGKRPHV).

It belongs to the universal ribosomal protein uL2 family. In terms of assembly, part of the 50S ribosomal subunit. Forms a bridge to the 30S subunit in the 70S ribosome.

One of the primary rRNA binding proteins. Required for association of the 30S and 50S subunits to form the 70S ribosome, for tRNA binding and peptide bond formation. It has been suggested to have peptidyltransferase activity; this is somewhat controversial. Makes several contacts with the 16S rRNA in the 70S ribosome. The polypeptide is Large ribosomal subunit protein uL2 (Agrobacterium fabrum (strain C58 / ATCC 33970) (Agrobacterium tumefaciens (strain C58))).